The primary structure comprises 417 residues: Serine hydroxymethyltransferase (417 aa).

(6S)-5,6,7,8-tetrahydrofolate is bound by residues leucine 121 and 125–127 (GHL). Lysine 229 carries the N6-(pyridoxal phosphate)lysine modification. Residue 355-357 (SPF) participates in (6S)-5,6,7,8-tetrahydrofolate binding.

It belongs to the SHMT family. Homodimer. It depends on pyridoxal 5'-phosphate as a cofactor.

Its subcellular location is the cytoplasm. It carries out the reaction (6R)-5,10-methylene-5,6,7,8-tetrahydrofolate + glycine + H2O = (6S)-5,6,7,8-tetrahydrofolate + L-serine. The protein operates within one-carbon metabolism; tetrahydrofolate interconversion. Its pathway is amino-acid biosynthesis; glycine biosynthesis; glycine from L-serine: step 1/1. Functionally, catalyzes the reversible interconversion of serine and glycine with tetrahydrofolate (THF) serving as the one-carbon carrier. This reaction serves as the major source of one-carbon groups required for the biosynthesis of purines, thymidylate, methionine, and other important biomolecules. Also exhibits THF-independent aldolase activity toward beta-hydroxyamino acids, producing glycine and aldehydes, via a retro-aldol mechanism. The polypeptide is Serine hydroxymethyltransferase (Shewanella sp. (strain ANA-3)).